Reading from the N-terminus, the 160-residue chain is Transcription elongation factor GreA (160 aa).

Positions 1-72 (MAEKTYVMTL…QIQILETKIR (72 aa)) form a coiled coil.

The protein belongs to the GreA/GreB family.

Its function is as follows. Necessary for efficient RNA polymerase transcription elongation past template-encoded arresting sites. The arresting sites in DNA have the property of trapping a certain fraction of elongating RNA polymerases that pass through, resulting in locked ternary complexes. Cleavage of the nascent transcript by cleavage factors such as GreA or GreB allows the resumption of elongation from the new 3'terminus. GreA releases sequences of 2 to 3 nucleotides. This chain is Transcription elongation factor GreA, found in Streptococcus thermophilus (strain ATCC BAA-491 / LMD-9).